Consider the following 280-residue polypeptide: MSNITVTNLHKSYGDVDALEDVSFEILDGEFVVILGESGAGKSTLLRCLNGLTEPTTGSVKIDGEPVNGPRDDVGMIFQQHNIIEEMTAYTNALSGSLNRTSLVRSLFQWNDREEKLDALRALDTVGLLDDAEQRAGRMSGGQQQRVGISRALVQDPNLLLADEPVASLDPASAESVMGYIKDAADQHDLTTLASLHQVNLAREFGQRFIGMKDGRVIFDGYRDDLTFDVIDDIYGNIQTDAIRTGDDANADVAPTTSSDGGTDAAGGPDQQPASDPHLS.

The region spanning 4-239 (ITVTNLHKSY…VIDDIYGNIQ (236 aa)) is the ABC transporter domain. An ATP-binding site is contributed by 36 to 43 (GESGAGKS). Residues 246-280 (GDDANADVAPTTSSDGGTDAAGGPDQQPASDPHLS) form a disordered region.

It belongs to the ABC transporter superfamily. Phosphonates importer (TC 3.A.1.9.1) family. The complex is composed of two ATP-binding proteins (PhnC), two transmembrane proteins (PhnE) and a solute-binding protein (PhnD).

The protein resides in the cell membrane. The enzyme catalyses phosphonate(out) + ATP + H2O = phosphonate(in) + ADP + phosphate + H(+). Part of the ABC transporter complex PhnCDE involved in phosphonates import. Responsible for energy coupling to the transport system. This is Phosphonates import ATP-binding protein PhnC from Halobacterium salinarum (strain ATCC 700922 / JCM 11081 / NRC-1) (Halobacterium halobium).